Consider the following 88-residue polypeptide: Small ribosomal subunit protein bS16 (88 aa).

Belongs to the bacterial ribosomal protein bS16 family.

In Desulfitobacterium hafniense (strain DSM 10664 / DCB-2), this protein is Small ribosomal subunit protein bS16.